The following is a 176-amino-acid chain: Zinc finger A20 and AN1 domain-containing stress-associated protein 9 (176 aa).

The A20-type zinc-finger motif lies at Ala16–Ala50. Zn(2+)-binding residues include Cys22, Cys26, Cys38, Cys41, Cys117, Cys120, Cys131, Cys133, Cys138, His141, His147, and Cys149. The segment at Pro111–Gly157 adopts an AN1-type zinc-finger fold.

In terms of biological role, may be involved in environmental stress response. The chain is Zinc finger A20 and AN1 domain-containing stress-associated protein 9 (SAP9) from Arabidopsis thaliana (Mouse-ear cress).